A 95-amino-acid polypeptide reads, in one-letter code: Large ribosomal subunit protein bL25 (95 aa).

This sequence belongs to the bacterial ribosomal protein bL25 family. As to quaternary structure, part of the 50S ribosomal subunit; part of the 5S rRNA/L5/L18/L25 subcomplex. Contacts the 5S rRNA. Binds to the 5S rRNA independently of L5 and L18.

Functionally, this is one of the proteins that binds to the 5S RNA in the ribosome where it forms part of the central protuberance. This is Large ribosomal subunit protein bL25 from Actinobacillus pleuropneumoniae serotype 3 (strain JL03).